Reading from the N-terminus, the 234-residue chain is Probable chemoreceptor glutamine deamidase CheD 1 (234 aa).

The protein belongs to the CheD family.

The enzyme catalyses L-glutaminyl-[protein] + H2O = L-glutamyl-[protein] + NH4(+). Its function is as follows. Probably deamidates glutamine residues to glutamate on methyl-accepting chemotaxis receptors (MCPs), playing an important role in chemotaxis. The polypeptide is Probable chemoreceptor glutamine deamidase CheD 1 (Albidiferax ferrireducens (strain ATCC BAA-621 / DSM 15236 / T118) (Rhodoferax ferrireducens)).